A 167-amino-acid polypeptide reads, in one-letter code: MDKLTIISGCLFLAADIFAIASIANPDWINTGGQEGALTVGLVKQCQTIHGRNRICVSPSLPPEWVTTLFFIILGIVSLTITCGLLVISHWRREATKYARWIAFMGMVLFCMAALIFPVGFYINQVGGQPYKLPNNTVVGSSYVLFVLSIFFTIVGLLFAGKVCLPG.

4 consecutive transmembrane segments (helical) span residues 7–29 (ISGCLFLAADIFAIASIANPDWI), 68–88 (TLFFIILGIVSLTITCGLLVI), 101–121 (WIAFMGMVLFCMAALIFPVGF), and 139–159 (VGSSYVLFVLSIFFTIVGLLF).

It is found in the cell projection. Its subcellular location is the cilium membrane. The protein localises to the cell membrane. Acts as a negative regulator of hedgehog signaling probably by promoting internalization and subsequent degradation of smoothened protein (SMO) present in the ciliary membrane. Plays a role in sonic hedgehog (SHH)-induced spinal neural progenitor cells differentiation. The sequence is that of Modulator of smoothened protein from Danio rerio (Zebrafish).